The primary structure comprises 907 residues: Protein translocase subunit SecA (907 aa).

ATP-binding positions include Gln87, 105–109, and Asp510; that span reads GEGKT. Residues Cys892, Cys894, Cys903, and His904 each contribute to the Zn(2+) site.

Belongs to the SecA family. Monomer and homodimer. Part of the essential Sec protein translocation apparatus which comprises SecA, SecYEG and auxiliary proteins SecDF-YajC and YidC. Zn(2+) serves as cofactor.

It is found in the cell inner membrane. The protein localises to the cytoplasm. It carries out the reaction ATP + H2O + cellular proteinSide 1 = ADP + phosphate + cellular proteinSide 2.. Part of the Sec protein translocase complex. Interacts with the SecYEG preprotein conducting channel. Has a central role in coupling the hydrolysis of ATP to the transfer of proteins into and across the cell membrane, serving both as a receptor for the preprotein-SecB complex and as an ATP-driven molecular motor driving the stepwise translocation of polypeptide chains across the membrane. This Acinetobacter baumannii (strain AB0057) protein is Protein translocase subunit SecA.